Reading from the N-terminus, the 476-residue chain is Protein transport protein Sec61 subunit alpha (476 aa).

At 2–33 (GIKFLEFIKPFCAVLPEIQKPERKIQFREKVL) the chain is on the cytoplasmic side. The chain crosses the membrane as a helical span at residues 34-53 (WTAITLFIFLVCCQIPLFGI). The Lumenal segment spans residues 54 to 76 (MSSDSADPFYWMRVILASNRGTL). Residues 77–96 (MELGISPIVTSGLIMQLLAG) traverse the membrane as a helical segment. Topologically, residues 97–117 (AKIIEVGDTPKDRALFNGAQK) are cytoplasmic. The chain crosses the membrane as a helical span at residues 118–138 (LFGMIITIGQAIVYVMTGMYG). Residues 139-144 (DPSEMG) lie on the Lumenal side of the membrane. A helical membrane pass occupies residues 145–165 (AGICLLIIIQLFVAGLIVLLL). The Cytoplasmic segment spans residues 166-172 (DELLQKG). Residues 173–193 (YGLGSGISLFIATNICETIVW) traverse the membrane as a helical segment. At 194 to 240 (KAFSPTTVNTGRGTEFEGAIIALFHLLATRTDKVRALREAFYRQNLP) the chain is on the lumenal side. The helical transmembrane segment at 241–261 (NILNLIATVFVFAVVIYFQGF) threads the bilayer. The Cytoplasmic portion of the chain corresponds to 262–288 (RVDLPIKSARYRGQYNTYPIKLFYTSN). Residues 289-309 (IPIILQSALVSNLYVISQMLS) form a helical membrane-spanning segment. Residues 310 to 354 (TRFSGNFLVNLLGTWSDATSGGPARAYPVAGLCYYLSPPESFGSV) lie on the Lumenal side of the membrane. The chain crosses the membrane as a helical span at residues 355-375 (LDDPVHAAIYIVFMLGSCAFF). The Cytoplasmic portion of the chain corresponds to 376 to 420 (SKTWIEVSGSSAKDVAKQLKEQQMVMRGHRETSMVHELNRYIPTA). Residues 421–441 (AAFGGLCIGGLSVMADFLGAI) traverse the membrane as a helical segment. At 442-445 (GSGT) the chain is on the lumenal side. The helical transmembrane segment at 446-462 (GILLAVTIIYQYFEIFV) threads the bilayer. Topologically, residues 463 to 476 (KEQSEMGSMGALLF) are cytoplasmic.

Belongs to the SecY/SEC61-alpha family. The SEC61 channel-forming translocon complex consists of channel-forming core components SEC61A1, SEC61B and SEC61G and different auxiliary components such as SEC62 and SEC63. The SEC61 channel associates with the multi-pass translocon (MPT) complex.

It is found in the endoplasmic reticulum membrane. Its function is as follows. Component of SEC61 channel-forming translocon complex that mediates transport of signal peptide-containing precursor polypeptides across the endoplasmic reticulum (ER). Forms a ribosome receptor and a gated pore in the ER membrane, both functions required for cotranslational translocation of nascent polypeptides. May cooperate with auxiliary protein SEC62, SEC63 and HSPA5/BiP to enable post-translational transport of small presecretory proteins. The SEC61 channel is also involved in ER membrane insertion of transmembrane proteins: it mediates membrane insertion of the first few transmembrane segments of proteins, while insertion of subsequent transmembrane regions of multi-pass membrane proteins is mediated by the multi-pass translocon (MPT) complex. The sequence is that of Protein transport protein Sec61 subunit alpha (sec61a) from Notothenia angustata (Rockcod).